Here is a 485-residue protein sequence, read N- to C-terminus: Putative phosphoethanolamine transferase HI_1064 (485 aa).

4 helical membrane-spanning segments follow: residues 33 to 53, 55 to 75, 81 to 101, and 125 to 145; these read ILPALFAVICAAFAGYFILIG, GMFTEPSVALILLATITILLL, SFYFILLPLTLLHAFYTPTGL, and FLLQIPVSSYLIAFAIPILIF.

It belongs to the phosphoethanolamine transferase family.

Its subcellular location is the cell membrane. In Haemophilus influenzae (strain ATCC 51907 / DSM 11121 / KW20 / Rd), this protein is Putative phosphoethanolamine transferase HI_1064.